A 341-amino-acid polypeptide reads, in one-letter code: Calcium-binding protein 39 (341 aa).

This sequence belongs to the Mo25 family. As to quaternary structure, component of a trimeric complex composed of STK11/LKB1, STRAD (STRADA or STRADB) and CAB39/MO25 (CAB39/MO25alpha or CAB39L/MO25beta): the complex tethers STK11/LKB1 in the cytoplasm and stimulates its catalytic activity.

The protein resides in the cytoplasm. Component of a complex that binds and activates STK11/LKB1. In the complex, required to stabilize the interaction between CAB39/MO25 (CAB39/MO25alpha or CAB39L/MO25beta) and STK11/LKB1. The chain is Calcium-binding protein 39 (CAB39) from Bos taurus (Bovine).